The chain runs to 437 residues: tRNA pseudouridine synthase Pus10 (437 aa).

One can recognise a THUMP domain in the interval valine 76–serine 198. Catalysis depends on aspartate 253, which acts as the Nucleophile. Tyrosine 321 and tyrosine 394 together coordinate substrate.

The protein belongs to the pseudouridine synthase Pus10 family.

The enzyme catalyses uridine(54) in tRNA = pseudouridine(54) in tRNA. The catalysed reaction is uridine(55) in tRNA = pseudouridine(55) in tRNA. In terms of biological role, responsible for synthesis of pseudouridine from uracil-54 and uracil-55 in the psi GC loop of transfer RNAs. The polypeptide is tRNA pseudouridine synthase Pus10 (Aeropyrum pernix (strain ATCC 700893 / DSM 11879 / JCM 9820 / NBRC 100138 / K1)).